The sequence spans 588 residues: Beta-(1--&gt;2)glucan export ATP-binding/permease protein NdvA (588 aa).

An ABC transmembrane type-1 domain is found at V21–E301. The next 6 membrane-spanning stretches (helical) occupy residues A22–F42, P57–A77, T136–L156, L158–G178, T248–G268, and V272–M292. Residues V335–T569 enclose the ABC transporter domain. G368 to T375 is a binding site for ATP.

Belongs to the ABC transporter superfamily. Beta-(1--&gt;2)glucan exporter (TC 3.A.1.108.1) family. Homodimer.

It is found in the cell inner membrane. The enzyme catalyses [(1-&gt;2)-beta-D-glucosyl](n)(in) + ATP + H2O = [(1-&gt;2)-beta-D-glucosyl](n)(out) + ADP + phosphate + H(+). Its function is as follows. Involved in beta-(1--&gt;2)glucan export which is required for crown gall tumor formation. Transmembrane domains (TMD) form a pore in the inner membrane and the ATP-binding domain (NBD) is responsible for energy generation. The protein is Beta-(1--&gt;2)glucan export ATP-binding/permease protein NdvA of Rhizobium radiobacter (Agrobacterium tumefaciens).